The following is a 455-amino-acid chain: Chromosomal replication initiator protein DnaA 2 (455 aa).

Residues 1–95 (MLTCNDCSTW…KRSSPLVTPS (95 aa)) form a domain I, interacts with DnaA modulators region. The interval 96–112 (IAKPATEVSEENKDFQL) is domain II. Positions 113 to 328 (KLNGAYRFDN…GAINKLTAYC (216 aa)) are domain III, AAA+ region. ATP is bound by residues G157, G159, K160, and T161. The tract at residues 329-455 (LLFNKPLTET…IAIDSPQHFV (127 aa)) is domain IV, binds dsDNA.

It belongs to the DnaA family. Oligomerizes as a right-handed, spiral filament on DNA at oriC.

The protein localises to the cytoplasm. Its function is as follows. Plays an essential role in the initiation and regulation of chromosomal replication. ATP-DnaA binds to the origin of replication (oriC) to initiate formation of the DNA replication initiation complex once per cell cycle. Binds the DnaA box (a 9 base pair repeat at the origin) and separates the double-stranded (ds)DNA. Forms a right-handed helical filament on oriC DNA; dsDNA binds to the exterior of the filament while single-stranded (ss)DNA is stabiized in the filament's interior. The ATP-DnaA-oriC complex binds and stabilizes one strand of the AT-rich DNA unwinding element (DUE), permitting loading of DNA polymerase. After initiation quickly degrades to an ADP-DnaA complex that is not apt for DNA replication. Binds acidic phospholipids. This is Chromosomal replication initiator protein DnaA 2 from Chlamydia trachomatis serovar D (strain ATCC VR-885 / DSM 19411 / UW-3/Cx).